A 152-amino-acid polypeptide reads, in one-letter code: UPF0266 membrane protein Ent638_2389 (152 aa).

Helical transmembrane passes span 6–26 (IVLV…EFIM), 45–65 (VDAF…VMSQ), and 67–87 (ALLT…LFWI).

Belongs to the UPF0266 family.

It is found in the cell inner membrane. This chain is UPF0266 membrane protein Ent638_2389, found in Enterobacter sp. (strain 638).